The chain runs to 328 residues: MIYQMQMPAKIEVDETTHTDYFGRFVAQPLERGYGVTLGNMMRRVLLASLPGTAITGIKVDGVFHEFSAIEGVREDVPEIVLNLKKVRFRSTCKRSCKTTLTITGPKDFTAGDIVAMEGEFDVLNKDLHIATVNEGSTLNIDVFVGRGRGYTPAEDNRPESMPIGYIAIDAIYTPIRNVKVAVENTRVGQRTDYEKMVLDVETDGSITPDDSISLAGRIINEHVAFFADFSPTEEEFTEEEFKQQDDEFEAMRKLLNTKIEDLDLSVRSHNCLRLAEIDSIGDLVSRKEDELLNYKNFGKKSLTELKEQLEKFELKFGMDITKYQMKG.

The interval 1 to 231 (MIYQMQMPAK…EHVAFFADFS (231 aa)) is alpha N-terminal domain (alpha-NTD). Positions 252–328 (MRKLLNTKIE…MDITKYQMKG (77 aa)) are alpha C-terminal domain (alpha-CTD).

It belongs to the RNA polymerase alpha chain family. Homodimer. The RNAP catalytic core consists of 2 alpha, 1 beta, 1 beta' and 1 omega subunit. When a sigma factor is associated with the core the holoenzyme is formed, which can initiate transcription.

The catalysed reaction is RNA(n) + a ribonucleoside 5'-triphosphate = RNA(n+1) + diphosphate. Functionally, DNA-dependent RNA polymerase catalyzes the transcription of DNA into RNA using the four ribonucleoside triphosphates as substrates. This chain is DNA-directed RNA polymerase subunit alpha, found in Chlorobium phaeovibrioides (strain DSM 265 / 1930) (Prosthecochloris vibrioformis (strain DSM 265)).